Here is a 217-residue protein sequence, read N- to C-terminus: Small ribosomal subunit protein eS6 (217 aa).

This sequence belongs to the eukaryotic ribosomal protein eS6 family.

This chain is Small ribosomal subunit protein eS6, found in Hyperthermus butylicus (strain DSM 5456 / JCM 9403 / PLM1-5).